Here is a 410-residue protein sequence, read N- to C-terminus: Lissencephaly-1 homolog (410 aa).

The LisH domain occupies 7–39 (QRDELNRAIADYLRSNGYEEAYSVFKKEAELDV). A coiled-coil region spans residues 56–82 (TSVIRLQKKVMELESKLNEAKEEFTSG). 7 WD repeats span residues 106 to 147 (GHRS…RTLK), 148 to 187 (GHTD…CIRT), 190 to 229 (GHDH…CVKT), 232 to 271 (GHRE…CKAE), 274 to 333 (EHEH…CLMT), 336 to 377 (GHDN…KTLN), and 378 to 410 (AHEH…WECR).

It belongs to the WD repeat LIS1/nudF family. In terms of assembly, can self-associate. Component of the cytosolic PAF-AH (I) heterotetrameric enzyme, which is composed of PAFAH1B1 (beta), PAFAH1B2 (alpha2) and PAFAH1B3 (alpha1) subunits. The catalytic activity of the enzyme resides in the alpha1 (PAFAH1B3) and alpha2 (PAFAH1B2) subunits, whereas the beta subunit (PAFAH1B1) has regulatory activity. Trimer formation is not essential for the catalytic activity. Interacts with dynein, dynactin, NDE1 and NDEL1.

Its subcellular location is the cytoplasm. It is found in the cytoskeleton. The protein resides in the microtubule organizing center. The protein localises to the centrosome. In terms of biological role, regulatory subunit (beta subunit) of the cytosolic type I platelet-activating factor (PAF) acetylhydrolase (PAF-AH (I)), an enzyme that catalyzes the hydrolyze of the acetyl group at the sn-2 position of PAF and its analogs and participates in PAF inactivation. Regulates the PAF-AH (I) activity in a catalytic dimer composition-dependent manner. Positively regulates the activity of the minus-end directed microtubule motor protein dynein. May enhance dynein-mediated microtubule sliding by targeting dynein to the microtubule plus end. Required for several dynein- and microtubule-dependent processes such as the maintenance of Golgi integrity, the peripheral transport of microtubule fragments and the coupling of the nucleus and centrosome. May be required for proliferation of neuronal precursors and neuronal migration. This Gallus gallus (Chicken) protein is Lissencephaly-1 homolog.